A 331-amino-acid polypeptide reads, in one-letter code: Barley B recombinant-like protein D (331 aa).

The stretch at 43 to 101 (ALMNDRDNAIRERDHALAEKKAAIAERDMAFTQRDAAMAERNAAVVERDNALAALELAR) forms a coiled coil. The interval 51 to 86 (AIRERDHALAEKKAAIAERDMAFTQRDAAMAERNAA) is alanine-zipper. Polar residues predominate over residues 104-122 (GLNMNNGNGFPQGSLSGSK). Disordered stretches follow at residues 104-140 (GLNM…PLQL) and 156-205 (AYPI…VGMS).

The protein belongs to the BBR/BPC family. Homodimer. Heterodimer.

It localises to the nucleus. In terms of biological role, transcriptional regulator that specifically binds to GA-rich elements (GAGA-repeats) present in regulatory sequences of genes involved in developmental processes. The chain is Barley B recombinant-like protein D from Oryza sativa subsp. japonica (Rice).